Reading from the N-terminus, the 367-residue chain is Leucine dehydrogenase (367 aa).

The active site involves lysine 80. Residue 180 to 186 coordinates NAD(+); the sequence is GVGNVAY.

Belongs to the Glu/Leu/Phe/Val dehydrogenases family. Homohexamer.

It catalyses the reaction L-leucine + NAD(+) + H2O = 4-methyl-2-oxopentanoate + NH4(+) + NADH + H(+). Its pathway is amino-acid degradation; L-leucine degradation; 4-methyl-2-oxopentanoate from L-leucine (dehydrogenase route): step 1/1. Catalyzes the reversible deamination of L-leucine to 4-methyl-2-oxopentanoate. The polypeptide is Leucine dehydrogenase (ldh) (Geobacillus stearothermophilus (Bacillus stearothermophilus)).